The sequence spans 472 residues: MSKIKTRFAPSPTGYLHVGGARTALYSWLYSRHNKGEFVLRIEDTDLERSTQEAINAIMDGMNWLNLNWDEGPYYQTKRFDRYNQAIDQMLEQGNAYRCYCSKEHLEALRETQMANGEKPRYDGRCRDNPCQHDPAQPHVVRFRNPQEGSVIFNDQIRGPIEFSNQELDDLIIRRTDGSPTYNFCVVIDDWDMEITHVIRGEDHINNTPRQINILKALGAPVPEYAHVSMILGDDGKKLSKRHGAVSVMQYRDDGYLPEALLNYLVRLGWSHGDQEIFSIEEMTELFSLDAINKSASAFNTEKLQWLNHHYINTLPPEKVAVHLAWHIEQQGIDSRNGPQLVDLIKLLGERCKTLKEMAESCRYFYEDFAEFDADAAKKHLRPVARQPLEVVHAKLASITDWTPENVHHAIQSTADELEVGMGKVGMPLRVAATGAGQSPGVDVTIHAIGQPRTLSRINQALEFIAQRETQS.

The 'HIGH' region motif lies at Pro10–Gly20. Residues Cys99, Cys101, Cys126, and Asp128 each contribute to the Zn(2+) site. Positions Lys238–Arg242 match the 'KMSKS' region motif. Residue Lys241 coordinates ATP.

Belongs to the class-I aminoacyl-tRNA synthetase family. Glutamate--tRNA ligase type 1 subfamily. In terms of assembly, monomer. Zn(2+) is required as a cofactor.

The protein localises to the cytoplasm. It catalyses the reaction tRNA(Glu) + L-glutamate + ATP = L-glutamyl-tRNA(Glu) + AMP + diphosphate. Functionally, catalyzes the attachment of glutamate to tRNA(Glu) in a two-step reaction: glutamate is first activated by ATP to form Glu-AMP and then transferred to the acceptor end of tRNA(Glu). This chain is Glutamate--tRNA ligase, found in Photorhabdus laumondii subsp. laumondii (strain DSM 15139 / CIP 105565 / TT01) (Photorhabdus luminescens subsp. laumondii).